Reading from the N-terminus, the 147-residue chain is DNA-directed RNA polymerase subunit 6 homolog (147 aa).

Residues 20–39 form a disordered region; the sequence is ETEEENFVDSEEESEDKDEI.

This sequence belongs to the archaeal RpoK/eukaryotic RPB6 RNA polymerase subunit family. As to quaternary structure, part of the viral DNA-directed RNA polymerase that consists of 8 polII-like subunits (RPB1, RPB2, RPB3, RPB5, RPB6, RPB7, RPB9, RPB10), a capping enzyme and a termination factor.

The protein resides in the host cytoplasm. The protein localises to the virion. Functionally, component of the DNA-directed RNA polymerase (RNAP) that catalyzes the transcription in the cytoplasm of viral DNA into RNA using the four ribonucleoside triphosphates as substrates. The protein is DNA-directed RNA polymerase subunit 6 homolog of Ornithodoros (relapsing fever ticks).